Reading from the N-terminus, the 194-residue chain is Molybdenum cofactor guanylyltransferase (194 aa).

GTP contacts are provided by residues 12 to 14, Lys-25, Asn-53, Asp-70, and Asp-100; that span reads LAG. Asp-100 is a binding site for Mg(2+).

This sequence belongs to the MobA family. Monomer. Requires Mg(2+) as cofactor.

The protein localises to the cytoplasm. It catalyses the reaction Mo-molybdopterin + GTP + H(+) = Mo-molybdopterin guanine dinucleotide + diphosphate. Transfers a GMP moiety from GTP to Mo-molybdopterin (Mo-MPT) cofactor (Moco or molybdenum cofactor) to form Mo-molybdopterin guanine dinucleotide (Mo-MGD) cofactor. In Photobacterium profundum (strain SS9), this protein is Molybdenum cofactor guanylyltransferase.